A 101-amino-acid polypeptide reads, in one-letter code: Protein translation factor SUI1 homolog (101 aa).

This sequence belongs to the SUI1 family.

The sequence is that of Protein translation factor SUI1 homolog from Methanoregula boonei (strain DSM 21154 / JCM 14090 / 6A8).